The chain runs to 716 residues: Fatty acid oxidation complex subunit alpha (716 aa).

Positions 1–189 (MIYQSPTIQV…KVGAVDAVVA (189 aa)) are enoyl-CoA hydratase/isomerase. A substrate-binding site is contributed by D296. The interval 311–716 (KEVNNAAVLG…AANNGSYYQA (406 aa)) is 3-hydroxyacyl-CoA dehydrogenase. NAD(+) is bound by residues M324, D343, 400-402 (VVE), K407, and S429. H450 acts as the For 3-hydroxyacyl-CoA dehydrogenase activity in catalysis. NAD(+) is bound at residue N453. The substrate site is built by N500 and Y660.

In the N-terminal section; belongs to the enoyl-CoA hydratase/isomerase family. The protein in the C-terminal section; belongs to the 3-hydroxyacyl-CoA dehydrogenase family. Heterotetramer of two alpha chains (FadB) and two beta chains (FadA).

The catalysed reaction is a (3S)-3-hydroxyacyl-CoA + NAD(+) = a 3-oxoacyl-CoA + NADH + H(+). The enzyme catalyses a (3S)-3-hydroxyacyl-CoA = a (2E)-enoyl-CoA + H2O. It carries out the reaction a 4-saturated-(3S)-3-hydroxyacyl-CoA = a (3E)-enoyl-CoA + H2O. It catalyses the reaction (3S)-3-hydroxybutanoyl-CoA = (3R)-3-hydroxybutanoyl-CoA. The catalysed reaction is a (3Z)-enoyl-CoA = a 4-saturated (2E)-enoyl-CoA. The enzyme catalyses a (3E)-enoyl-CoA = a 4-saturated (2E)-enoyl-CoA. It functions in the pathway lipid metabolism; fatty acid beta-oxidation. In terms of biological role, involved in the aerobic and anaerobic degradation of long-chain fatty acids via beta-oxidation cycle. Catalyzes the formation of 3-oxoacyl-CoA from enoyl-CoA via L-3-hydroxyacyl-CoA. It can also use D-3-hydroxyacyl-CoA and cis-3-enoyl-CoA as substrate. The polypeptide is Fatty acid oxidation complex subunit alpha (Shewanella baltica (strain OS195)).